Consider the following 440-residue polypeptide: MTELDSLWEAIQNSFRQDTTPVTFDTLIAPAKAISLSQNQLEIEVPTPVHRDFWRKNLNTQLKEFAQRELGRNIEPHYVLEGEFTYTNKKTEDDPTPSFEMDTPLNPHYNFGTFVVGEGNKMAHAAAFAVAESPGSLYNPLFIYGGVGLGKTHLMEAIGNHMLQVNPNSRVKYVTSEDFTNDYINAIRNNTTEQLREEYRNLDLLLIDDIQFLANKEGTQLEFFNTFNALHDRKKQIVMTSDRIPNEIPELQDRLVSRFRWGLTVEITPPDLETRIAILRSKVEEDHIDIGNDTLNYIAGQIDTNIRELEGALTKVQAFANLSGERITPSLASQALKGLHRVAKNEISIATIQKQVADFYNITQGDILGKKRVKQIVMPRQIAMYLSRELTDSSLPKIGNEFGGKDHTTVLHAIDKIETELKKDTDLQNDITKLKAKLRS.

Positions 1–72 (MTELDSLWEA…KEFAQRELGR (72 aa)) are domain I, interacts with DnaA modulators. A domain II region spans residues 72–103 (RNIEPHYVLEGEFTYTNKKTEDDPTPSFEMDT). The segment at 104–320 (PLNPHYNFGT…GALTKVQAFA (217 aa)) is domain III, AAA+ region. Residues G148, G150, K151, and T152 each contribute to the ATP site. The tract at residues 321–440 (NLSGERITPS…ITKLKAKLRS (120 aa)) is domain IV, binds dsDNA.

Belongs to the DnaA family. As to quaternary structure, oligomerizes as a right-handed, spiral filament on DNA at oriC.

Its subcellular location is the cytoplasm. Its function is as follows. Plays an essential role in the initiation and regulation of chromosomal replication. ATP-DnaA binds to the origin of replication (oriC) to initiate formation of the DNA replication initiation complex once per cell cycle. Binds the DnaA box (a 9 base pair repeat at the origin) and separates the double-stranded (ds)DNA. Forms a right-handed helical filament on oriC DNA; dsDNA binds to the exterior of the filament while single-stranded (ss)DNA is stabiized in the filament's interior. The ATP-DnaA-oriC complex binds and stabilizes one strand of the AT-rich DNA unwinding element (DUE), permitting loading of DNA polymerase. After initiation quickly degrades to an ADP-DnaA complex that is not apt for DNA replication. Binds acidic phospholipids. The chain is Chromosomal replication initiator protein DnaA from Limosilactobacillus reuteri (strain DSM 20016) (Lactobacillus reuteri).